The primary structure comprises 614 residues: Aspartate--tRNA ligase (614 aa).

E174 is a binding site for L-aspartate. The interval Q198–K201 is aspartate. Position 220 (R220) interacts with L-aspartate. Residues R220–E222 and Q229 contribute to the ATP site. H448 serves as a coordination point for L-aspartate. E482 contacts ATP. R489 serves as a coordination point for L-aspartate. Residue G534–R537 coordinates ATP. Residues Y587–E614 are disordered.

It belongs to the class-II aminoacyl-tRNA synthetase family. Type 1 subfamily. In terms of assembly, homodimer.

The protein resides in the cytoplasm. It carries out the reaction tRNA(Asp) + L-aspartate + ATP = L-aspartyl-tRNA(Asp) + AMP + diphosphate. Catalyzes the attachment of L-aspartate to tRNA(Asp) in a two-step reaction: L-aspartate is first activated by ATP to form Asp-AMP and then transferred to the acceptor end of tRNA(Asp). The sequence is that of Aspartate--tRNA ligase from Lactobacillus johnsonii (strain CNCM I-12250 / La1 / NCC 533).